A 132-amino-acid polypeptide reads, in one-letter code: Small ribosomal subunit protein uS8 (132 aa).

The protein belongs to the universal ribosomal protein uS8 family. As to quaternary structure, part of the 30S ribosomal subunit. Contacts proteins S5 and S12.

Functionally, one of the primary rRNA binding proteins, it binds directly to 16S rRNA central domain where it helps coordinate assembly of the platform of the 30S subunit. This chain is Small ribosomal subunit protein uS8, found in Staphylococcus epidermidis (strain ATCC 35984 / DSM 28319 / BCRC 17069 / CCUG 31568 / BM 3577 / RP62A).